We begin with the raw amino-acid sequence, 105 residues long: Gastrin/cholecystokinin-like peptide (105 aa).

An N-terminal signal peptide occupies residues 1-20 (MKTKVFLGLILSAAVTACLC). The propeptide occupies 21 to 38 (RPAAKAPGGSHRPTSSLA). Positions 24–51 (AKAPGGSHRPTSSLARRDWPEPPSQEQQ) are disordered. Tyrosine 87 is subject to Sulfotyrosine. Residue phenylalanine 93 is modified to Phenylalanine amide. Residues 97 to 105 (STEDAADAA) constitute a propeptide that is removed on maturation.

It belongs to the gastrin/cholecystokinin family.

The protein localises to the secreted. Functionally, potent stimulus of gastric acid, but not of pancreatic secretion. This Gallus gallus (Chicken) protein is Gastrin/cholecystokinin-like peptide.